The chain runs to 92 residues: RQC P-site tRNA stabilizing factor (92 aa).

In terms of domain architecture, S4 RNA-binding spans 5-65 (MRLDKYLKVS…GPKIVTAKIE (61 aa)).

This sequence belongs to the RqcP family. In terms of assembly, associates with stalled 50S ribosomal subunits. Binds to RqcH, 23S rRNA and the P-site tRNA. Does not require RqcH for association with 50S subunits.

Key component of the ribosome quality control system (RQC), a ribosome-associated complex that mediates the extraction of incompletely synthesized nascent chains from stalled ribosomes and their subsequent degradation. RqcH recruits Ala-charged tRNA, and with RqcP directs the elongation of stalled nascent chains on 50S ribosomal subunits, leading to non-templated C-terminal alanine extensions (Ala tail). The Ala tail promotes nascent chain degradation. RqcP is associated with the translocation-like movement of the peptidyl-tRNA from the A-site into the P-site. This Listeria innocua serovar 6a (strain ATCC BAA-680 / CLIP 11262) protein is RQC P-site tRNA stabilizing factor.